We begin with the raw amino-acid sequence, 297 residues long: HTH-type transcriptional regulator ArgP (297 aa).

Positions 4–60 constitute an HTH lysR-type domain; sequence PDYRTLQALDAVIRERGFERAAQKLCITQSAVSQRIKQLENMFGQPLLVRTVPPRPT. Positions 21 to 40 form a DNA-binding region, H-T-H motif; that stretch reads FERAAQKLCITQSAVSQRIK.

The protein belongs to the LysR transcriptional regulatory family. Homodimer.

In terms of biological role, controls the transcription of genes involved in arginine and lysine metabolism. In Escherichia coli O7:K1 (strain IAI39 / ExPEC), this protein is HTH-type transcriptional regulator ArgP.